The primary structure comprises 816 residues: Phosphatidylinositol 4-kinase beta (816 aa).

Disordered stretches follow at residues 1-30 (MGDT…GSLL), 101-120 (EDEM…RRRR), and 248-318 (AHRK…SFSS). The residue at position 2 (Gly-2) is an N-acetylglycine. The interaction with ACBD3 stretch occupies residues 2–68 (GDTVVEPAPL…VKLLHGGMAV (67 aa)). Residues 52–242 (CQDVLEKVKL…GTKLRKLILS (191 aa)) enclose the PIK helical domain. A Phosphoserine modification is found at Ser-258. At Thr-263 the chain carries Phosphothreonine. Residues Ser-266, Ser-275, Ser-277, Ser-284, and Ser-294 each carry the phosphoserine modification. 2 stretches are compositionally biased toward polar residues: residues 278 to 297 (DATA…SNPK) and 306 to 318 (SSST…SFSS). Ser-428 carries the post-translational modification Phosphoserine. Position 438 is a phosphothreonine (Thr-438). Ser-511 bears the Phosphoserine mark. Phosphothreonine occurs at positions 517 and 519. Positions 535–801 (EPWQEKVRRI…MVDGSMRSIT (267 aa)) constitute a PI3K/PI4K catalytic domain. The tract at residues 541–547 (VRRIREG) is G-loop. A catalytic loop region spans residues 668-676 (QVKDRHNGN). The interval 687–711 (HIDFGFILSSSPRNLGFETSAFKLT) is activation loop.

It belongs to the PI3/PI4-kinase family. Type III PI4K subfamily. Interacts with ARF1 and ARF3 in the Golgi complex, but not with ARF4, ARF5 or ARF6. Interacts with NCS1/FREQ in a calcium-independent manner. Interacts with CALN1/CABP8 and CALN2/CABP7; in a calcium-dependent manner; this interaction competes with NCS1/FREQ binding. Interacts with ACBD3. Interacts with ARMH3, YWHAB, YWHAE, YWHAG, YWHAH, YWHAQ, YWHAZ and SFN. Interacts with GGA2 (via VHS domain); the interaction is important for PI4KB location at the Golgi apparatus membrane. Interacts with ATG9A. Requires Mg(2+) as cofactor. Mn(2+) is required as a cofactor.

The protein localises to the endomembrane system. It is found in the mitochondrion outer membrane. Its subcellular location is the rough endoplasmic reticulum membrane. It localises to the golgi apparatus. The protein resides in the golgi apparatus membrane. The catalysed reaction is a 1,2-diacyl-sn-glycero-3-phospho-(1D-myo-inositol) + ATP = a 1,2-diacyl-sn-glycero-3-phospho-(1D-myo-inositol 4-phosphate) + ADP + H(+). With respect to regulation, inhibited by wortmannin. Increased kinase activity upon interaction with NCS1/FREQ. Its function is as follows. Phosphorylates phosphatidylinositol (PI) in the first committed step in the production of the second messenger inositol-1,4,5,-trisphosphate (PIP). May regulate Golgi disintegration/reorganization during mitosis, possibly via its phosphorylation. Involved in Golgi-to-plasma membrane trafficking. In Plecturocebus moloch (Dusky titi monkey), this protein is Phosphatidylinositol 4-kinase beta (PI4KB).